A 409-amino-acid polypeptide reads, in one-letter code: Epoxyqueuosine reductase (409 aa).

A disordered region spans residues 1–23; it reads MDRNPELAIADARPSQDGRAAPS. D178 functions as the Proton donor in the catalytic mechanism. Positions 232 to 261 constitute a 4Fe-4S ferredoxin-type domain; the sequence is AAPETPGAHCGSCTRCLGACPTGAIVAPYR. Residues C241, C244, C247, C251, C267, C294, C297, and C301 each coordinate [4Fe-4S] cluster.

The protein belongs to the QueG family. As to quaternary structure, monomer. The cofactor is cob(II)alamin. [4Fe-4S] cluster is required as a cofactor.

Its subcellular location is the cytoplasm. The enzyme catalyses epoxyqueuosine(34) in tRNA + AH2 = queuosine(34) in tRNA + A + H2O. Its pathway is tRNA modification; tRNA-queuosine biosynthesis. Its function is as follows. Catalyzes the conversion of epoxyqueuosine (oQ) to queuosine (Q), which is a hypermodified base found in the wobble positions of tRNA(Asp), tRNA(Asn), tRNA(His) and tRNA(Tyr). The protein is Epoxyqueuosine reductase of Burkholderia pseudomallei (strain K96243).